A 92-amino-acid polypeptide reads, in one-letter code: uncharacterized protein (92 aa).

To M.jannaschii MJ0782.1.

This is an uncharacterized protein from Methanothermobacter thermautotrophicus (strain ATCC 29096 / DSM 1053 / JCM 10044 / NBRC 100330 / Delta H) (Methanobacterium thermoautotrophicum).